A 63-amino-acid chain; its full sequence is Beta-defensin 4 (63 aa).

A signal peptide spans 1–22 (MRIHYLLFTFLLVLLSPLAAFT). Gln23 is modified (pyrrolidone carboxylic acid). 3 disulfides stabilise this stretch: Cys31-Cys59, Cys38-Cys52, and Cys42-Cys60.

It belongs to the beta-defensin family. Tongue, esophagus and trachea.

It is found in the secreted. Its function is as follows. Exhibits antimicrobial activity against Gram-negative bacteria and Gram-positive bacteria. May act as a ligand for C-C chemokine receptor CCR6. Can bind to mouse (but not human) CCR6 and induce chemotactic activity of CCR6-expressing cells. The protein is Beta-defensin 4 (Defb4) of Mus musculus (Mouse).